A 231-amino-acid chain; its full sequence is 5'-methylthioadenosine/S-adenosylhomocysteine nucleosidase (231 aa).

Glutamate 12 (proton acceptor) is an active-site residue. Residues glycine 78, valine 153, and 174–175 (ME) each bind substrate. Residue aspartate 198 is the Proton donor of the active site.

It belongs to the PNP/UDP phosphorylase family. MtnN subfamily.

It carries out the reaction S-adenosyl-L-homocysteine + H2O = S-(5-deoxy-D-ribos-5-yl)-L-homocysteine + adenine. It catalyses the reaction S-methyl-5'-thioadenosine + H2O = 5-(methylsulfanyl)-D-ribose + adenine. The enzyme catalyses 5'-deoxyadenosine + H2O = 5-deoxy-D-ribose + adenine. It functions in the pathway amino-acid biosynthesis; L-methionine biosynthesis via salvage pathway; S-methyl-5-thio-alpha-D-ribose 1-phosphate from S-methyl-5'-thioadenosine (hydrolase route): step 1/2. Its function is as follows. Catalyzes the irreversible cleavage of the glycosidic bond in both 5'-methylthioadenosine (MTA) and S-adenosylhomocysteine (SAH/AdoHcy) to adenine and the corresponding thioribose, 5'-methylthioribose and S-ribosylhomocysteine, respectively. Also cleaves 5'-deoxyadenosine, a toxic by-product of radical S-adenosylmethionine (SAM) enzymes, into 5-deoxyribose and adenine. The polypeptide is 5'-methylthioadenosine/S-adenosylhomocysteine nucleosidase (Vibrio vulnificus (strain CMCP6)).